A 283-amino-acid chain; its full sequence is NAD kinase (283 aa).

Asp68 serves as the catalytic Proton acceptor. NAD(+) is bound by residues 68–69, Arg73, 142–143, Arg153, Arg170, Asp172, and 183–188; these read DG, ND, and TAYSLS.

It belongs to the NAD kinase family. A divalent metal cation serves as cofactor.

It localises to the cytoplasm. It catalyses the reaction NAD(+) + ATP = ADP + NADP(+) + H(+). In terms of biological role, involved in the regulation of the intracellular balance of NAD and NADP, and is a key enzyme in the biosynthesis of NADP. Catalyzes specifically the phosphorylation on 2'-hydroxyl of the adenosine moiety of NAD to yield NADP. In Symbiobacterium thermophilum (strain DSM 24528 / JCM 14929 / IAM 14863 / T), this protein is NAD kinase.